We begin with the raw amino-acid sequence, 265 residues long: Tryptophan synthase alpha chain (265 aa).

Active-site proton acceptor residues include glutamate 48 and aspartate 59.

It belongs to the TrpA family. As to quaternary structure, tetramer of two alpha and two beta chains.

The catalysed reaction is (1S,2R)-1-C-(indol-3-yl)glycerol 3-phosphate + L-serine = D-glyceraldehyde 3-phosphate + L-tryptophan + H2O. It participates in amino-acid biosynthesis; L-tryptophan biosynthesis; L-tryptophan from chorismate: step 5/5. In terms of biological role, the alpha subunit is responsible for the aldol cleavage of indoleglycerol phosphate to indole and glyceraldehyde 3-phosphate. This Vesicomyosocius okutanii subsp. Calyptogena okutanii (strain HA) protein is Tryptophan synthase alpha chain.